The primary structure comprises 144 residues: Large ribosomal subunit protein uL15 (144 aa).

Residues 1–52 (MRLNTLSPAEGAKHAPKRVGRGIGSGLGKTGGRGHKGQKSRSGGGVRRGFEG) form a disordered region. The segment covering 21 to 31 (RGIGSGLGKTG) has biased composition (gly residues).

Belongs to the universal ribosomal protein uL15 family. In terms of assembly, part of the 50S ribosomal subunit.

Its function is as follows. Binds to the 23S rRNA. The chain is Large ribosomal subunit protein uL15 from Buchnera aphidicola subsp. Acyrthosiphon kondoi (Acyrthosiphon kondoi symbiotic bacterium).